The chain runs to 657 residues: MRRAVCFPALCLLLNLHAAGCFSGNNDHFLAINQKKSGKPVFIYKHSQDIEKSLDIAPQKIYRHSYHSSSEAQVSKRHQIVNSAFPRPAYDPSLNLLAMDGQDLEVENLPIPAANVIVVTLQMDVNKLNITLLRIFRQGVAAALGLLPQQVHINRLIGKKNSIELFVSPINRKTGISDALPSEEVLRSLNINVLHQSLSQFGITEVSPEKNVLQGQHEADKIWSKEGFYAVVIFLSIFVIIVTCLMILYRLKERFQLSLRQDKEKNQEIHLSPITLQPALSEAKTVHSMVQPEQAPKVLNVVVDPQGRGAPEIKATTATSVCPSPFKMKPIGLQERRGSNVSLTLDMSSLGNIEPFVSIPTPREKVAMEYLQSASRILTRSQLRDVVASSHLLQSEFMEIPMNFVDPKEIDIPRHGTKNRYKTILPNPLSRVCLRPKNVTDSLSTYINANYIRGYSGKEKAFIATQGPMINTVDDFWQMVWQEDSPVIVMITKLKEKNEKCVLYWPEKRGIYGKVEVLVISVNECDNYTIRNLVLKQGSHTQHVKHYWYTSWPDHKTPDSAQPLLQLMLDVEEDRLASQGRGPVVVHCSAGIGRTGCFIATSIGCQQLKEEGVVDALSIVCQLRMDRGGMVQTSEQYEFVHHALCLYESRLSAETVQ.

Residues 1-21 form the signal peptide; that stretch reads MRRAVCFPALCLLLNLHAAGC. Over 22 to 227 the chain is Extracellular; that stretch reads FSGNNDHFLA…EADKIWSKEG (206 aa). A glycan (O-linked (Xyl...) (chondroitin sulfate) serine) is linked at Ser23. Residue Asn129 is glycosylated (N-linked (GlcNAc...) asparagine). The chain crosses the membrane as a helical span at residues 228–248; sequence FYAVVIFLSIFVIIVTCLMIL. The Cytoplasmic segment spans residues 249 to 657; it reads YRLKERFQLS…ESRLSAETVQ (409 aa). At Ser272 the chain carries Phosphoserine. Ser339 is subject to Phosphoserine; by PKA. A Tyrosine-protein phosphatase domain is found at 393 to 647; the sequence is LQSEFMEIPM…EFVHHALCLY (255 aa). Residues Asp554, 588–594, and Gln632 each bind substrate; that span reads CSAGIGR. Residue Cys588 is the Phosphocysteine intermediate of the active site.

Belongs to the protein-tyrosine phosphatase family. Receptor class 7 subfamily. In terms of assembly, interacts with MAPKs. As to expression, detected in cerebrospinal fluid (at protein level). Expressed in brain, placenta, small intestine, stomach, uterus and weakly in the prostate. Isoform alpha has been observed only in the brain. Isoform gamma is expressed in brain, placenta and uterus. Isoform delta is expressed in brain, kidney, placenta, prostate, small intestine and uterus.

It is found in the secreted. The protein resides in the cell membrane. It localises to the cytoplasm. The protein localises to the perinuclear region. The catalysed reaction is O-phospho-L-tyrosyl-[protein] + H2O = L-tyrosyl-[protein] + phosphate. Sequesters mitogen-activated protein kinases (MAPKs) such as MAPK1, MAPK3 and MAPK14 in the cytoplasm in an inactive form. The MAPKs bind to a dephosphorylated kinase interacting motif, phosphorylation of which by the protein kinase A complex releases the MAPKs for activation and translocation into the nucleus. This chain is Receptor-type tyrosine-protein phosphatase R (PTPRR), found in Homo sapiens (Human).